The primary structure comprises 282 residues: Tyrosine recombinase XerA (282 aa).

Residues 2–79 enclose the Core-binding (CB) domain; the sequence is EAINEVIEEY…ALRSYFRFEG (78 aa). Positions 95–271 constitute a Tyr recombinase domain; that stretch reads SLPKSLTREE…TVEHLRKAQE (177 aa). Active-site residues include R132, K157, H223, R226, and H249. Y258 acts as the O-(3'-phospho-DNA)-tyrosine intermediate in catalysis.

Belongs to the 'phage' integrase family. XerA subfamily.

It is found in the cytoplasm. Its function is as follows. Site-specific tyrosine recombinase, which acts by catalyzing the cutting and rejoining of the recombining DNA molecules. The protein is Tyrosine recombinase XerA of Thermococcus onnurineus (strain NA1).